Consider the following 281-residue polypeptide: Aquaporin-9 (281 aa).

Residues 1–17 (MGAFVNTKVYIENKNIR) are Cytoplasmic-facing. Residues 18–36 (DWLSEALSMFMYMSLLLGS) traverse the membrane as a helical segment. At 37–50 (AATGHFSGREDDAL) the chain is on the extracellular side. Residues 51–69 (FGVIFQGFSITFGIYIGGA) traverse the membrane as a helical segment. The Cytoplasmic segment spans residues 70 to 71 (MS). Residues 72–84 (GAIINPALTLAVA) constitute an intramembrane region (discontinuously helical). An NPA 1 motif is present at residues 76–78 (NPA). The Cytoplasmic segment spans residues 85-90 (LLGKIS). Residues 91–115 (WRKCIVLQSAQYIGSFIASAVVYLI) traverse the membrane as a helical segment. The Extracellular portion of the chain corresponds to 116-157 (YNDSLDAFGAGANFTATEPGVFRKDVAGIWSTFPKTYLKERG). Asn117 and Asn128 each carry an N-linked (GlcNAc...) asparagine glycan. A helical transmembrane segment spans residues 158–175 (AIFNQIFCSMLLTFGFLA). The Cytoplasmic portion of the chain corresponds to 176–187 (ISDYKNFRPSKG). Residues 188 to 204 (LFPIAVGLLVMTVFLAF) traverse the membrane as a helical segment. The Extracellular segment spans residues 205–207 (SYS). Positions 208-222 (TGAAMNPARDFSPRL) form an intramembrane region, discontinuously helical. The NPA 2 motif lies at 213–215 (NPA). The Extracellular portion of the chain corresponds to 223–241 (WSLIIGYGIEVFSYNQYEW). Residues 242-262 (FWIPWLMPYVGAMLGALIYQL) form a helical membrane-spanning segment. At 263–281 (LIGAQWSKGQKGESKHKDP) the chain is on the cytoplasmic side.

Belongs to the MIP/aquaporin (TC 1.A.8) family.

The protein localises to the cell membrane. The enzyme catalyses H2O(in) = H2O(out). Functionally, aquaglyceroporin that may modulate the water content and osmolytes during anhydrobiosis. The polypeptide is Aquaporin-9 (Milnesium tardigradum (Water bear)).